The chain runs to 288 residues: Polyamine aminopropyltransferase (288 aa).

Residues 9–238 (ETLHDQFGQY…GIMTFAWATD (230 aa)) form the PABS domain. Glutamine 33 is an S-methyl-5'-thioadenosine binding site. 2 residues coordinate spermidine: histidine 64 and aspartate 88. S-methyl-5'-thioadenosine contacts are provided by residues glutamate 108 and 140-141 (DG). Catalysis depends on aspartate 158, which acts as the Proton acceptor. 158 to 161 (DCTD) provides a ligand contact to spermidine. Residue proline 165 participates in S-methyl-5'-thioadenosine binding.

Belongs to the spermidine/spermine synthase family. As to quaternary structure, homodimer or homotetramer.

It localises to the cytoplasm. The enzyme catalyses S-adenosyl 3-(methylsulfanyl)propylamine + putrescine = S-methyl-5'-thioadenosine + spermidine + H(+). Its pathway is amine and polyamine biosynthesis; spermidine biosynthesis; spermidine from putrescine: step 1/1. Catalyzes the irreversible transfer of a propylamine group from the amino donor S-adenosylmethioninamine (decarboxy-AdoMet) to putrescine (1,4-diaminobutane) to yield spermidine. The chain is Polyamine aminopropyltransferase from Shigella boydii serotype 18 (strain CDC 3083-94 / BS512).